We begin with the raw amino-acid sequence, 253 residues long: MGQCGITSSKTVLVFLNLIFWGAAGILCYVGAYVFITYDDYDHFFEDVYTLFPAVVIIAVGALLFIIGLIGCCATIRESRCGLATFVFILLLVFVTEVVVVVLGYVYRAKVENEVDRSIQKVYKTYNGTNSDAASRAIDYVQRQLHCCGIHNYSDWENTDWFKETKNQSVPLSCCRETAKSCNGSLANPSDLYAEGCEALVVKKLQEILMHVIWAALAFAAIQLLGMLCACIVLCRRSRDPAYELLITGGTYA.

Residues 1–11 (MGQCGITSSKT) lie on the Cytoplasmic side of the membrane. Residues 12 to 32 (VLVFLNLIFWGAAGILCYVGA) form a helical membrane-spanning segment. Topologically, residues 33–50 (YVFITYDDYDHFFEDVYT) are extracellular. A helical membrane pass occupies residues 51–71 (LFPAVVIIAVGALLFIIGLIG). Residues 72–85 (CCATIRESRCGLAT) lie on the Cytoplasmic side of the membrane. Residues 86 to 106 (FVFILLLVFVTEVVVVVLGYV) traverse the membrane as a helical segment. Over 107 to 212 (YRAKVENEVD…KKLQEILMHV (106 aa)) the chain is Extracellular. Residues Asn127, Asn152, Asn167, and Asn183 are each glycosylated (N-linked (GlcNAc...) asparagine). A helical transmembrane segment spans residues 213 to 233 (IWAALAFAAIQLLGMLCACIV). Over 234-253 (LCRRSRDPAYELLITGGTYA) the chain is Cytoplasmic.

This sequence belongs to the tetraspanin (TM4SF) family. In terms of assembly, interacts with claudin-11/CLDN11 and integrins.

The protein localises to the membrane. Its function is as follows. Regulates the proliferation and migration of oligodendrocytes, a process essential for normal myelination and repair. The protein is Tetraspanin-3 (Tspan3) of Mus musculus (Mouse).